A 492-amino-acid chain; its full sequence is N-succinylglutamate 5-semialdehyde dehydrogenase (492 aa).

Residue 220-225 coordinates NAD(+); sequence GSANTG. Catalysis depends on residues Glu-243 and Cys-277.

This sequence belongs to the aldehyde dehydrogenase family. AstD subfamily.

The catalysed reaction is N-succinyl-L-glutamate 5-semialdehyde + NAD(+) + H2O = N-succinyl-L-glutamate + NADH + 2 H(+). It participates in amino-acid degradation; L-arginine degradation via AST pathway; L-glutamate and succinate from L-arginine: step 4/5. Functionally, catalyzes the NAD-dependent reduction of succinylglutamate semialdehyde into succinylglutamate. This Escherichia coli O6:H1 (strain CFT073 / ATCC 700928 / UPEC) protein is N-succinylglutamate 5-semialdehyde dehydrogenase.